A 211-amino-acid chain; its full sequence is Ribosomal RNA small subunit methyltransferase G (211 aa).

Residues glycine 74, leucine 79, 125–126 (AE), and arginine 140 contribute to the S-adenosyl-L-methionine site.

It belongs to the methyltransferase superfamily. RNA methyltransferase RsmG family.

Its subcellular location is the cytoplasm. Specifically methylates the N7 position of guanine in position 518 of 16S rRNA. The sequence is that of Ribosomal RNA small subunit methyltransferase G from Clavibacter michiganensis subsp. michiganensis (strain NCPPB 382).